Consider the following 171-residue polypeptide: CASP-like protein 1C3 (171 aa).

The Cytoplasmic portion of the chain corresponds to 1–6; that stretch reads MVKPKR. Residues 7–27 traverse the membrane as a helical segment; sequence LLSLLLRLIAFGATLAAVIIM. Topologically, residues 28–52 are extracellular; sequence ATSHEKGSFFALSYEAKYSDTPAFK. A helical transmembrane segment spans residues 53 to 73; that stretch reads YFVIANAIVTVYGFLALFIPS. Topologically, residues 74–79 are cytoplasmic; the sequence is ESPLWR. A helical transmembrane segment spans residues 80–100; the sequence is LVLALDLVFTMLLISSISAAL. At 101-130 the chain is on the extracellular side; that stretch reads AVAQVGKKGNSSAGWLPVCGQVTKYCNQVT. Asn110 carries N-linked (GlcNAc...) asparagine glycosylation. A helical transmembrane segment spans residues 131–151; the sequence is GALVAGFIAIITYIILLLYSI. Residues 152–171 lie on the Cytoplasmic side of the membrane; that stretch reads YTFLNSLLGKTPCRLSSPGI.

This sequence belongs to the Casparian strip membrane proteins (CASP) family. As to quaternary structure, homodimer and heterodimers.

It localises to the cell membrane. This Populus trichocarpa (Western balsam poplar) protein is CASP-like protein 1C3.